A 1218-amino-acid polypeptide reads, in one-letter code: Protein jagged-1 (1218 aa).

The first 33 residues, 1–33, serve as a signal peptide directing secretion; that stretch reads MRSPRTRGRSGRPLSLLLALLCALRAKVCGASG. At 34-1067 the chain is on the extracellular side; it reads QFELEILSMQ…QRRPLKNRTD (1034 aa). A glycan (N-linked (GlcNAc...) asparagine) is linked at Asn-143. A DSL domain is found at 185–229; it reads VTCDDYYYGFGCNKFCRPRDDFFGHYACDQNGNKTCMEGWMGPEC. Intrachain disulfides connect Cys-187-Cys-196 and Cys-200-Cys-212. Residues 199 to 207 are important for interaction with NOTCH1; that stretch reads FCRPRDDFF. Asn-217 carries N-linked (GlcNAc...) asparagine glycosylation. Cystine bridges form between Cys-220–Cys-229, Cys-234–Cys-245, Cys-238–Cys-251, Cys-253–Cys-262, Cys-265–Cys-276, Cys-271–Cys-282, Cys-284–Cys-293, Cys-300–Cys-312, Cys-306–Cys-322, Cys-324–Cys-333, Cys-340–Cys-351, Cys-345–Cys-360, Cys-362–Cys-371, Cys-378–Cys-389, Cys-383–Cys-398, Cys-400–Cys-409, Cys-416–Cys-427, Cys-421–Cys-436, Cys-438–Cys-447, Cys-454–Cys-464, Cys-458–Cys-473, Cys-475–Cys-484, Cys-491–Cys-502, Cys-496–Cys-511, Cys-513–Cys-522, Cys-529–Cys-540, Cys-534–Cys-549, Cys-551–Cys-560, Cys-578–Cys-605, Cys-599–Cys-615, Cys-617–Cys-626, Cys-633–Cys-644, Cys-638–Cys-653, Cys-655–Cys-664, Cys-671–Cys-682, Cys-676–Cys-691, Cys-693–Cys-702, Cys-709–Cys-720, Cys-714–Cys-729, and Cys-731–Cys-740. The region spanning 230 to 263 is the EGF-like 1 domain; it reads NRAICRQGCSPKHGSCKLPGDCRCQYGWQGLYCD. The 31-residue stretch at 264–294 folds into the EGF-like 2; atypical domain; that stretch reads KCIPHPGCVHGICNEPWQCLCETNWGGQLCD. EGF-like domains follow at residues 296–334 and 336–372; these read DLNYCGTHQPCLNGGTCSNTGPDKYQCSCPEGYSGPNCE and AEHACLSDPCHNRGSCKETSLGFECECSPGWTGPTCS. The EGF-like 5; calcium-binding domain maps to 374-410; sequence NIDDCSPNNCSHGGTCQDLVNGFKCVCPPQWTGKTCQ. An N-linked (GlcNAc...) asparagine glycan is attached at Asn-382. The 37-residue stretch at 412–448 folds into the EGF-like 6; calcium-binding domain; the sequence is DANECEAKPCVNAKSCKNLIASYYCDCLPGWMGQNCD. The EGF-like 7; calcium-binding domain maps to 450-485; the sequence is NINDCLGQCQNDASCRDLVNGYRCICPPGYAGDHCE. Positions 487–523 constitute an EGF-like 8; calcium-binding domain; the sequence is DIDECASNPCLNGGHCQNEINRFQCLCPTGFSGNLCQ. 2 EGF-like domains span residues 525-561 and 586-627; these read DIDYCEPNPCQNGAQCYNRASDYFCKCPEDYEGKNCS and DTPE…TYCH. The N-linked (GlcNAc...) asparagine glycan is linked to Asn-559. The 37-residue stretch at 629 to 665 folds into the EGF-like 11; calcium-binding domain; the sequence is NINDCESNPCRNGGTCIDGVNSYKCICSDGWEGAYCE. In terms of domain architecture, EGF-like 12; calcium-binding spans 667–703; sequence NINDCSQNPCHNGGTCRDLVNDFYCDCKNGWKGKTCH. 2 EGF-like domains span residues 705–741 and 744–780; these read RDSQCDEATCNNGGTCYDEGDAFKCMCPGGWEGTTCN and RNSSCLPNPCHNGGTCVVNGESFTCVCKEGWEGPICA. Residue Asn-745 is glycosylated (N-linked (GlcNAc...) asparagine). 9 cysteine pairs are disulfide-bonded: Cys-748-Cys-759, Cys-753-Cys-768, Cys-770-Cys-779, Cys-786-Cys-797, Cys-791-Cys-806, Cys-808-Cys-817, Cys-824-Cys-835, Cys-829-Cys-844, and Cys-846-Cys-855. Positions 782-818 constitute an EGF-like 15; calcium-binding domain; the sequence is NTNDCSPHPCYNSGTCVDGDNWYRCECAPGFAGPDCR. Residues 820–856 enclose the EGF-like 16; calcium-binding domain; sequence NINECQSSPCAFGATCVDEINGYRCVCPPGHSGAKCQ. Residues Asn-960, Asn-991, Asn-1045, and Asn-1064 are each glycosylated (N-linked (GlcNAc...) asparagine). A helical membrane pass occupies residues 1068 to 1093; the sequence is FLVPLLSSVLTVAWICCLVTAFYWCL. Residues 1094–1218 are Cytoplasmic-facing; that stretch reads RKRRKPGSHT…QSLNRMEYIV (125 aa). The segment at 1152-1218 is disordered; sequence HNSEVEEDDM…QSLNRMEYIV (67 aa). The segment covering 1189 to 1199 has biased composition (polar residues); that stretch reads TPTKHPNWTNK.

In terms of assembly, interacts with NOTCH2 and NOTCH3. Interacts with NOTCH1 (in the presence of calcium ions). Widely expressed in adult and fetal tissues. In cervix epithelium expressed in undifferentiated subcolumnar reserve cells and squamous metaplasia. Expression is up-regulated in cervical squamous cell carcinoma. Expressed in bone marrow cell line HS-27a which supports the long-term maintenance of immature progenitor cells.

The protein localises to the membrane. The protein resides in the cell membrane. Functionally, ligand for multiple Notch receptors and involved in the mediation of Notch signaling. May be involved in cell-fate decisions during hematopoiesis. Seems to be involved in early and late stages of mammalian cardiovascular development. Inhibits myoblast differentiation. Enhances fibroblast growth factor-induced angiogenesis (in vitro). This chain is Protein jagged-1 (JAG1), found in Homo sapiens (Human).